The following is a 260-amino-acid chain: Aspartate/glutamate leucyltransferase (260 aa).

The protein belongs to the R-transferase family. Bpt subfamily.

The protein resides in the cytoplasm. It catalyses the reaction N-terminal L-glutamyl-[protein] + L-leucyl-tRNA(Leu) = N-terminal L-leucyl-L-glutamyl-[protein] + tRNA(Leu) + H(+). The catalysed reaction is N-terminal L-aspartyl-[protein] + L-leucyl-tRNA(Leu) = N-terminal L-leucyl-L-aspartyl-[protein] + tRNA(Leu) + H(+). In terms of biological role, functions in the N-end rule pathway of protein degradation where it conjugates Leu from its aminoacyl-tRNA to the N-termini of proteins containing an N-terminal aspartate or glutamate. This Sphingomonas elodea protein is Aspartate/glutamate leucyltransferase.